The primary structure comprises 641 residues: Sodium-dependent nutrient amino acid transporter 1 (641 aa).

The interval 1 to 38 (MELKGVQPSNGSSNGSGNGATNAASTEKTDAEKPTAER) is disordered. Topologically, residues 1 to 40 (MELKGVQPSNGSSNGSGNGATNAASTEKTDAEKPTAERTN) are cytoplasmic. A compositionally biased stretch (low complexity) spans 9–26 (SNGSSNGSGNGATNAAST). Residues 27 to 36 (EKTDAEKPTA) are compositionally biased toward basic and acidic residues. Helical transmembrane passes span 41 to 61 (WGNG…LGNV), 74 to 94 (GAFL…MYYL), and 111 to 131 (SVVP…ICII). N-linked (GlcNAc...) asparagine glycans are attached at residues Asn185 and Asn190. A run of 9 helical transmembrane segments spans residues 229–249 (PDWK…LVIM), 258–278 (AAYF…IRAV), 307–327 (AVVQ…MFAS), 341–361 (IVTT…FAIL), 401–421 (LFSV…IVAL), 447–467 (VCGF…ILTL), 474–494 (TYVV…VYGL), 516–536 (CWSF…MVTI), and 552–572 (IAGW…GLWY).

The protein belongs to the sodium:neurotransmitter symporter (SNF) (TC 2.A.22) family. In terms of tissue distribution, in larvae, weak specific expression in the anterior midgut just proximal to the gastric caeca reproductive rudiments, common ureters of the Malpighian tubules, and distal swollen portion of the anterior pair of Malpighian tubules. Expression is also seen in the imaginal disks of the head; brain hemispheres and the ventral ganglion. Stronger expression in the posterior midgut.

The protein localises to the membrane. Unusual broad substrate spectrum amino acid:sodium cotransporter that promotes absorption of the D isomers of essential amino acids. Neutral amino acids are the preferred substrates, especially methionine and phenylalanine. This chain is Sodium-dependent nutrient amino acid transporter 1 (NAAT1), found in Drosophila melanogaster (Fruit fly).